Here is a 141-residue protein sequence, read N- to C-terminus: Hemoglobin subunit alpha-1 (141 aa).

A Globin domain is found at 1–141 (VLSPADKNNV…VSTVLTSKYR (141 aa)). His58 serves as a coordination point for O2. Residue His87 participates in heme b binding.

This sequence belongs to the globin family. Heterotetramer of two alpha chains and two beta chains. Red blood cells.

In terms of biological role, involved in oxygen transport from the lung to the various peripheral tissues. This Varecia variegata (Black-and-white ruffed lemur) protein is Hemoglobin subunit alpha-1.